The sequence spans 115 residues: NADH-ubiquinone oxidoreductase chain 3 (115 aa).

The next 3 membrane-spanning stretches (helical) occupy residues 3-23 (FVLILMTNTLLALLLMIITFW), 55-75 (FFLVAITFLLFDLEIALLLPL), and 84-104 (LPLMVTSSLLLITILALSLAY).

It belongs to the complex I subunit 3 family. In terms of assembly, core subunit of respiratory chain NADH dehydrogenase (Complex I) which is composed of 45 different subunits. Interacts with TMEM186. Interacts with TMEM242.

The protein resides in the mitochondrion inner membrane. It catalyses the reaction a ubiquinone + NADH + 5 H(+)(in) = a ubiquinol + NAD(+) + 4 H(+)(out). Functionally, core subunit of the mitochondrial membrane respiratory chain NADH dehydrogenase (Complex I) which catalyzes electron transfer from NADH through the respiratory chain, using ubiquinone as an electron acceptor. Essential for the catalytic activity of complex I. The sequence is that of NADH-ubiquinone oxidoreductase chain 3 from Pan troglodytes (Chimpanzee).